Reading from the N-terminus, the 264-residue chain is Methionine aminopeptidase (264 aa).

His79 contributes to the substrate binding site. Asp97, Asp108, and His171 together coordinate a divalent metal cation. His178 is a substrate binding site. 2 residues coordinate a divalent metal cation: Glu204 and Glu235.

Belongs to the peptidase M24A family. Methionine aminopeptidase type 1 subfamily. Monomer. The cofactor is Co(2+). Zn(2+) is required as a cofactor. Requires Mn(2+) as cofactor. Fe(2+) serves as cofactor.

It carries out the reaction Release of N-terminal amino acids, preferentially methionine, from peptides and arylamides.. In terms of biological role, removes the N-terminal methionine from nascent proteins. The N-terminal methionine is often cleaved when the second residue in the primary sequence is small and uncharged (Met-Ala-, Cys, Gly, Pro, Ser, Thr, or Val). Requires deformylation of the N(alpha)-formylated initiator methionine before it can be hydrolyzed. The sequence is that of Methionine aminopeptidase from Buchnera aphidicola subsp. Acyrthosiphon pisum (strain APS) (Acyrthosiphon pisum symbiotic bacterium).